Here is a 186-residue protein sequence, read N- to C-terminus: Inner membrane-spanning protein YciB (186 aa).

The next 5 helical transmembrane spans lie at 10 to 30 (IILF…AVAI), 47 to 67 (VEPL…ATLL), 76 to 96 (WKPT…QLVF), 121 to 141 (WGWT…AYNF), and 149 to 169 (FKLF…ALYL).

It belongs to the YciB family.

It is found in the cell inner membrane. Functionally, plays a role in cell envelope biogenesis, maintenance of cell envelope integrity and membrane homeostasis. This chain is Inner membrane-spanning protein YciB, found in Acidovorax sp. (strain JS42).